The primary structure comprises 344 residues: GLIPR1-like protein 2 (344 aa).

The SCP domain maps to 58–192; that stretch reads VNLHNELRGD…IHAAIFICNY (135 aa). Residues 254–274 traverse the membrane as a helical segment; that stretch reads TFILLLRILCFILCVITVLIV. Composition is skewed to acidic residues over residues 292–304 and 312–334; these read EESE…EEKE and EMEM…EEET. A disordered region spans residues 292–344; sequence EESEAGNEEEEKEEEKKEKEEMEMEIMEMEEEKEEREEEEEETQKEKMEEEEK. Basic and acidic residues predominate over residues 335–344; it reads QKEKMEEEEK.

It belongs to the CRISP family. Highly expressed in testis. Detected in prostate, kidney, bladder, lung and bone marrow.

The protein resides in the membrane. This chain is GLIPR1-like protein 2 (GLIPR1L2), found in Homo sapiens (Human).